Reading from the N-terminus, the 533-residue chain is Tyrosine ammonia-lyase (533 aa).

The active-site Proton donor/acceptor is the Y57. Residue H87 participates in substrate binding. The segment at residues 146-148 is a cross-link (5-imidazolinone (Ala-Gly)); it reads ASG. A 2,3-didehydroalanine (Ser) modification is found at S147. Residues N200 and R305 each coordinate substrate.

Belongs to the TAL/TAM family. In terms of assembly, homotetramer; dimer of dimers. Post-translationally, contains an active site 4-methylidene-imidazol-5-one (MIO), which is formed autocatalytically by cyclization and dehydration of residues Ala-Ser-Gly.

It carries out the reaction L-tyrosine = (E)-4-coumarate + NH4(+). The catalysed reaction is L-tyrosine = 3-amino-3-(4-hydroxyphenyl)propanoate. In terms of biological role, has ammonia-lyase and, to a lesser extent, aminomutase activity. Catalyzes the rearrangement of L-tyrosine to R-beta-tyrosine and S-beta-tyrosine. Does not accept L-histidine or L-phenylalanine as substrates. In Cupriavidus metallidurans (strain ATCC 43123 / DSM 2839 / NBRC 102507 / CH34) (Ralstonia metallidurans), this protein is Tyrosine ammonia-lyase.